Reading from the N-terminus, the 860-residue chain is MTNTGPIVRRVFRYASVLDTICYKRGIHSSRALLSESRLNSVPPDRTRNIGIIAHIDAGKTTTTERMLFYSGKTRRIGNVDEGDTVTDYLPSERERGITIQSAAITIPWNKNKINIIDTPGHADFTFEVTRSLRVLDSCVTILDAVAGVEAQTEKVWKQAQALGIPKIAYVNKMDRDGAGFSRTVKEIIQKLQTRVVLCNIPYWETPVNDVPIFKGVLDVLNKKLLKWNSDSNANGTDISVTDLEKEMDKYPELYEMVSKSRESMVETLGEFDETIIDSFLENDEDYMKIPVAVLNSAIKRGTLANYVTPVFCGSSFRNIGVQPLMDAVVNFLPSPLETKVPDISSNAPKALAKMKGKNRKKKVTSEPTDVPLSMDPKHGLVINKNPNLTTALAFKVITHPTRGVMTFFRVYSGKLTSNTTIMNTRTGKKLNLRKLLLMHGDEPEVVPSISAGNIGVISGTDDDIVTGDTIVSHGPVNKPFNDLESSLKMLPIEIPPPLFNSSIEPLTAGDTRHLNSCIQILLREDPSLKVSVDEDLGQIILSGMGELHLEIIKERLVTDMKANARLRDVAVSYKETLGKPNYKSVTQSTGDNGCVSIEISMDSFEGLAEESSFADEDGAIVLEHENNIVILEPSATPEYMQTAIDERRWKSDHSLEDLQESLVHGCITALQLGGPVFGFALHSTVIRIKNWHFPVDSKDYNSSSLLDISRRAVTKNIKDLGESEKDLFSLLEPIMQTKVYINSDSLGEVVHDLTHRCQATITSIDDESENMDALNWANEESERVYVPPDYTMKNTNNLQVELRNKKVIVAETPLREMIGYLSRLRSITQGRGVFDMSYLGMKRVIKSRLASISNEFNFM.

Residues 45-337 enclose the tr-type G domain; it reads DRTRNIGIIA…AVVNFLPSPL (293 aa). GTP is bound by residues 54–61, 118–122, and 172–175; these read AHIDAGKT, DTPGH, and NKMD.

The protein belongs to the TRAFAC class translation factor GTPase superfamily. Classic translation factor GTPase family. EF-G/EF-2 subfamily.

Its subcellular location is the mitochondrion. In terms of biological role, mitochondrial GTPase that mediates the disassembly of ribosomes from messenger RNA at the termination of mitochondrial protein biosynthesis. Not involved in the GTP-dependent ribosomal translocation step during translation elongation. The sequence is that of Ribosome-releasing factor 2, mitochondrial from Debaryomyces hansenii (strain ATCC 36239 / CBS 767 / BCRC 21394 / JCM 1990 / NBRC 0083 / IGC 2968) (Yeast).